The primary structure comprises 492 residues: Probable malate:quinone oxidoreductase 1 (492 aa).

The protein belongs to the MQO family. Requires FAD as cofactor.

The catalysed reaction is (S)-malate + a quinone = a quinol + oxaloacetate. It functions in the pathway carbohydrate metabolism; tricarboxylic acid cycle; oxaloacetate from (S)-malate (quinone route): step 1/1. In Staphylococcus aureus (strain MW2), this protein is Probable malate:quinone oxidoreductase 1.